A 160-amino-acid polypeptide reads, in one-letter code: Major pollen allergen Bet v 1-J (160 aa).

Brassinolide contacts are provided by Lys-55, Tyr-82, Tyr-84, and Asn-101. 2 hydrophobic ligand pocket regions span residues 116–118 and 133–141; these read KIN and QIKASKEMG.

The protein belongs to the BetVI family. Pollen.

It localises to the cytoplasm. Functionally, may be a general steroid carrier protein. The sequence is that of Major pollen allergen Bet v 1-J from Betula pendula (European white birch).